The following is a 176-amino-acid chain: Inorganic pyrophosphatase (176 aa).

Residues K31, R45, and Y57 each contribute to the substrate site. Mg(2+) is bound by residues D67, D72, and D104. Y142 serves as a coordination point for substrate.

Belongs to the PPase family. Homohexamer. The cofactor is Mg(2+).

Its subcellular location is the cytoplasm. The enzyme catalyses diphosphate + H2O = 2 phosphate + H(+). Functionally, catalyzes the hydrolysis of inorganic pyrophosphate (PPi) forming two phosphate ions. In Haemophilus influenzae (strain ATCC 51907 / DSM 11121 / KW20 / Rd), this protein is Inorganic pyrophosphatase.